Consider the following 106-residue polypeptide: Toxin-like structure LSTX-D4 (106 aa).

The signal sequence occupies residues 1 to 20 (MMKVLVVVALLVTLISYSSS). Positions 21–41 (EGIGDLEADELLSLMANEQTR) are excised as a propeptide. 4 cysteine pairs are disulfide-bonded: C45–C60, C52–C69, C59–C85, and C71–C83.

This sequence belongs to the neurotoxin 19 (CSTX) family. 02 (D7) subfamily. Expressed by the venom gland.

Its subcellular location is the secreted. This Lycosa singoriensis (Wolf spider) protein is Toxin-like structure LSTX-D4.